We begin with the raw amino-acid sequence, 121 residues long: Ribonuclease P protein component (121 aa).

This sequence belongs to the RnpA family. Consists of a catalytic RNA component (M1 or rnpB) and a protein subunit.

The catalysed reaction is Endonucleolytic cleavage of RNA, removing 5'-extranucleotides from tRNA precursor.. In terms of biological role, RNaseP catalyzes the removal of the 5'-leader sequence from pre-tRNA to produce the mature 5'-terminus. It can also cleave other RNA substrates such as 4.5S RNA. The protein component plays an auxiliary but essential role in vivo by binding to the 5'-leader sequence and broadening the substrate specificity of the ribozyme. In Chromobacterium violaceum (strain ATCC 12472 / DSM 30191 / JCM 1249 / CCUG 213 / NBRC 12614 / NCIMB 9131 / NCTC 9757 / MK), this protein is Ribonuclease P protein component.